Here is a 152-residue protein sequence, read N- to C-terminus: Transcriptional regulator MraZ (152 aa).

2 SpoVT-AbrB domains span residues 5–52 (ATLV…PLPE) and 81–124 (ASEC…DEQT).

It belongs to the MraZ family. In terms of assembly, forms oligomers.

The protein resides in the cytoplasm. It localises to the nucleoid. Negatively regulates its own expression and that of the subsequent genes in the proximal part of the division and cell wall (dcw) gene cluster. Acts by binding directly to DNA. May also regulate the expression of genes outside the dcw cluster. In Pectobacterium atrosepticum (strain SCRI 1043 / ATCC BAA-672) (Erwinia carotovora subsp. atroseptica), this protein is Transcriptional regulator MraZ.